A 432-amino-acid polypeptide reads, in one-letter code: Tol-Pal system protein TolB (432 aa).

An N-terminal signal peptide occupies residues 1–21 (MKKVIYTIVGFVFMWSTSVYA).

The protein belongs to the TolB family. In terms of assembly, the Tol-Pal system is composed of five core proteins: the inner membrane proteins TolA, TolQ and TolR, the periplasmic protein TolB and the outer membrane protein Pal. They form a network linking the inner and outer membranes and the peptidoglycan layer.

The protein resides in the periplasm. Its function is as follows. Part of the Tol-Pal system, which plays a role in outer membrane invagination during cell division and is important for maintaining outer membrane integrity. The sequence is that of Tol-Pal system protein TolB from Hydrogenovibrio crunogenus (strain DSM 25203 / XCL-2) (Thiomicrospira crunogena).